The primary structure comprises 92 residues: PqqA binding protein (92 aa).

It belongs to the PqqD family. Monomer. Interacts with PqqE.

Its pathway is cofactor biosynthesis; pyrroloquinoline quinone biosynthesis. In terms of biological role, functions as a PqqA binding protein and presents PqqA to PqqE, in the pyrroloquinoline quinone (PQQ) biosynthetic pathway. This chain is PqqA binding protein, found in Xanthomonas oryzae pv. oryzae (strain PXO99A).